The following is a 72-amino-acid chain: Translation initiation factor IF-1 (72 aa).

The S1-like domain maps to 1-72; the sequence is MSKDDVIEMQ…TRGRITWRAK (72 aa).

It belongs to the IF-1 family. In terms of assembly, component of the 30S ribosomal translation pre-initiation complex which assembles on the 30S ribosome in the order IF-2 and IF-3, IF-1 and N-formylmethionyl-tRNA(fMet); mRNA recruitment can occur at any time during PIC assembly.

Its subcellular location is the cytoplasm. One of the essential components for the initiation of protein synthesis. Stabilizes the binding of IF-2 and IF-3 on the 30S subunit to which N-formylmethionyl-tRNA(fMet) subsequently binds. Helps modulate mRNA selection, yielding the 30S pre-initiation complex (PIC). Upon addition of the 50S ribosomal subunit IF-1, IF-2 and IF-3 are released leaving the mature 70S translation initiation complex. In Clostridium kluyveri (strain ATCC 8527 / DSM 555 / NBRC 12016 / NCIMB 10680 / K1), this protein is Translation initiation factor IF-1.